The chain runs to 243 residues: MIIIPARLKSSRFENKVLEDIFGLPMVVRCAKNANLVDECVVACDDESIMQTCQKFRIKAVLTSKHHNSGTERCLEAARILGLKNDERVLNLQGDEPFLEKEVILALLEATQNAPFMATCAKVIDEEQAKSPNLVKVVLDSQNNALYFSRSLIPVLRDFDAKRQTPLLGHIGIYGFHNKEILEELCALKPCVLEEIEKLEQLRALYYQKKIAVKIVQSQSVGIDTKEDLQNALKIFSPNLLER.

This sequence belongs to the KdsB family.

The protein resides in the cytoplasm. It carries out the reaction 3-deoxy-alpha-D-manno-oct-2-ulosonate + CTP = CMP-3-deoxy-beta-D-manno-octulosonate + diphosphate. Its pathway is nucleotide-sugar biosynthesis; CMP-3-deoxy-D-manno-octulosonate biosynthesis; CMP-3-deoxy-D-manno-octulosonate from 3-deoxy-D-manno-octulosonate and CTP: step 1/1. It functions in the pathway bacterial outer membrane biogenesis; lipopolysaccharide biosynthesis. Activates KDO (a required 8-carbon sugar) for incorporation into bacterial lipopolysaccharide in Gram-negative bacteria. This chain is 3-deoxy-manno-octulosonate cytidylyltransferase, found in Helicobacter pylori (strain P12).